An 82-amino-acid chain; its full sequence is Apovitellenin-1 (82 aa).

This sequence belongs to the apovitellenin family. In terms of assembly, monomer. As to expression, found in egg yolk and in plasma.

Functionally, protein component of the very low density lipoprotein (VLDL) of egg-laying females. Potent lipoprotein lipase inhibitor, preventing the loss of triglycerides from VLDL on their way from the liver to the growing oocytes. In Meleagris gallopavo (Wild turkey), this protein is Apovitellenin-1.